The chain runs to 184 residues: Probable cobalt-precorrin-6B C(15)-methyltransferase (decarboxylating) (184 aa).

S-adenosyl-L-methionine contacts are provided by residues T12, 36 to 40 (GCGTG), D59, and A87.

This sequence belongs to the methyltransferase superfamily. Archaeal-type CbiT family.

It catalyses the reaction Co-precorrin-6B + S-adenosyl-L-methionine = Co-precorrin-7 + S-adenosyl-L-homocysteine + CO2. It functions in the pathway cofactor biosynthesis; adenosylcobalamin biosynthesis; cob(II)yrinate a,c-diamide from sirohydrochlorin (anaerobic route): step 8/10. In terms of biological role, catalyzes the methylation of C-15 in cobalt-precorrin-6B followed by the decarboxylation of C-12 to form cobalt-precorrin-7. This is Probable cobalt-precorrin-6B C(15)-methyltransferase (decarboxylating) from Methanosarcina acetivorans (strain ATCC 35395 / DSM 2834 / JCM 12185 / C2A).